We begin with the raw amino-acid sequence, 355 residues long: Ataxin-3 (355 aa).

M1 participates in a covalent cross-link: Peptide (Met-Gly) (interchain with G-Cter in ubiquitin). The Josephin domain maps to 1–180; it reads MESIFHEKQE…DCEADQLLQM (180 aa). The Nucleophile role is filled by C14. H119 functions as the Proton acceptor in the catalytic mechanism. N134 is a catalytic residue. K200 is covalently cross-linked (Glycyl lysine isopeptide (Lys-Gly) (interchain with G-Cter in ubiquitin)). 2 UIM domains span residues 224–243 and 244–263; these read DDEDDLQRALAMSRQEIDME and DEEADLRRAIQLSMQGSSRG. A disordered region spans residues 257 to 333; the sequence is MQGSSRGMCE…AGNAMSEEDV (77 aa). Residues S268, S272, and S273 each carry the phosphoserine modification. Over residues 279–301 the composition is skewed to basic and acidic residues; sequence EELRKRREAYFEKQQHQQQEADR. Positions 312–326 are enriched in polar residues; it reads PTTSSGGLRSNQAGN. A Phosphoserine modification is found at S321. Positions 329-348 constitute a UIM 3 domain; the sequence is SEEDVLRATVTVSLETAKDS.

Interacts with STUB1/CHIP (when monoubiquitinated). Interacts with DNA repair proteins RAD23A and RAD23B. Interacts with BECN1 (via its poly-Gln domain). Interacts with PRKN, UBR2, VCP and tubulin. In terms of processing, monoubiquitinated by UBE2W, possibly leading to activate the deubiquitinating enzyme activity. In terms of tissue distribution, ubiquitously expressed.

The protein resides in the nucleus matrix. The protein localises to the nucleus. It localises to the lysosome membrane. It carries out the reaction Thiol-dependent hydrolysis of ester, thioester, amide, peptide and isopeptide bonds formed by the C-terminal Gly of ubiquitin (a 76-residue protein attached to proteins as an intracellular targeting signal).. Functionally, deubiquitinating enzyme involved in protein homeostasis maintenance, transcription, cytoskeleton regulation, myogenesis and degradation of misfolded chaperone substrates. Binds long polyubiquitin chains and trims them, while it has weak or no activity against chains of 4 or less ubiquitins. Involved in degradation of misfolded chaperone substrates via its interaction with STUB1/CHIP: recruited to monoubiquitinated STUB1/CHIP, and restricts the length of ubiquitin chain attached to STUB1/CHIP substrates and preventing further chain extension. Interacts with key regulators of transcription and represses transcription: acts as a histone-binding protein that regulates transcription. Acts as a negative regulator of mTORC1 signaling in response to amino acid deprivation by mediating deubiquitination of RHEB, thereby promoting RHEB inactivation by the TSC-TBC complex. Regulates autophagy via the deubiquitination of 'Lys-402' of BECN1 leading to the stabilization of BECN1. In Rattus norvegicus (Rat), this protein is Ataxin-3 (Atxn3).